A 619-amino-acid chain; its full sequence is MNNQGGAVAANGQRPQAQQQQQQGGIMGIISTLIRFMAIYYIASFAFSKFLGTGNNNNNGGVVLNNNNGTTNTSIPSNSVRLANSWPEGIEFNMKVYLSTSNETVGDWLVWEQDKLSYDWKDSNTIPTKNITFDTTPYLQNNGSLFAHIITSRRAYLNQPKSQLHKVHPLIVYLPKPKPKGKNLLEEKSKDEPEVEYDPTELISYWKPTLSLHLIVDHTIYPPDSIPKEIVSYFNITNGFYSPIIYCNEFWLYREHLKPVNETVKQLSIEINYSSMGLFKWQLQIQMQKSLDMQESFGGGGNSAMGGASVGDEFKRMLTDNDPWILGLTLIVSVLHTIFEFLAFKNDIQFWKNNKSMEGLSVKTITLNCVCMGIIFLYLLDNETSYMILASSGFGFLVEFWKLGKAMTIKITWMTSLPLPKRIEFINKDEYMSKTKQYDDMAMKYLSWLLFPLVIGTSIYSLYYHEHKSWYSWVVSSLVRTVYTFEFIMMTPQLFINYKLKSVSHLPWRVFMYRALNTFIDDLFAFIIKMPLLHRLSCLRDDIIFIVYLYQRWIYPVDKKRSHYGSEEAEEVQQQDKKEIKEKVEEREEEKQEEEEEEKEKEEESTSSSKVTKRKTKKV.

Residues 1-21 (MNNQGGAVAANGQRPQAQQQQ) form a disordered region. Over residues 9–21 (AANGQRPQAQQQQ) the composition is skewed to low complexity. Helical transmembrane passes span 26 to 46 (IMGI…ASFA), 324 to 344 (WILG…FLAF), 360 to 380 (LSVK…LYLL), 384 to 404 (TSYM…WKLG), 445 to 465 (YLSW…LYYH), and 474 to 496 (VVSS…QLFI). The tract at residues 566–619 (SEEAEEVQQQDKKEIKEKVEEREEEKQEEEEEEKEKEEESTSSSKVTKRKTKKV) is disordered. Residues 574 to 590 (QQDKKEIKEKVEEREEE) are compositionally biased toward basic and acidic residues. Over residues 591–605 (KQEEEEEEKEKEEES) the composition is skewed to acidic residues.

The protein belongs to the CLPTM1 family.

It localises to the membrane. The protein is CLPTM1-like membrane protein cnrB (cnrB) of Dictyostelium discoideum (Social amoeba).